Reading from the N-terminus, the 405-residue chain is Mucosal addressin cell adhesion molecule 1 (405 aa).

Residues 1–21 form the signal peptide; sequence MESILALLLALALVPYQLSRG. Ig-like domains lie at 22–109 and 110–227; these read QSFQ…ILVY and AFPD…TSPK. Over 22–364 the chain is Extracellular; sequence QSFQVNPPES…PGQVTPNSSS (343 aa). 3 disulfide bridges follow: C45–C91, C49–C95, and C132–C200. Residues 221-257 are mucin-like; that stretch reads QSQTSPKPPNTTSAEPYILTSSSTAEAVSTGLNITTL. N230 and N253 each carry an N-linked (GlcNAc...) asparagine glycan. Positions 255–275 are disordered; the sequence is TTLPSAPPYPKLSPRTLSSEG. Positions 258–357 constitute an Ig-like 3 domain; the sequence is PSAPPYPKLS…EVTNLYVPGQ (100 aa). A disulfide bridge connects residues C293 and C341. A glycan (N-linked (GlcNAc...) asparagine) is linked at N361. A helical membrane pass occupies residues 365-385; sequence TVVLWIGSLVLGLLALVFLAY. The Cytoplasmic portion of the chain corresponds to 386 to 405; the sequence is RLWKCYRPGPRPDTSSCTHL.

In terms of assembly, homodimer. In terms of processing, O-glycosylated; contains syalic acid. The Ser/Thr-rich mucin-like domain may provide possible sites for O-glycosylation. In terms of tissue distribution, highly expressed on high endothelial venules (HEV) of organized intestinal lymphoid tissues like the Peyer patches and mesenteric lymph nodes, and in the lamina propria of the intestine. Some expression found in the spleen, and low levels of expression in the peripheral lymph nodes and the lactating mammary gland. No expression was detected in the liver, kidneys, lungs or in normal brain. Expressed as well in brain endothelioma cells, and mucosal tissues which are in a chronic state of inflammation, such as inflamed pancreas.

The protein localises to the membrane. Functionally, cell adhesion leukocyte receptor expressed by mucosal venules, helps to direct lymphocyte traffic into mucosal tissues including the Peyer patches and the intestinal lamina propria. It can bind both the integrin alpha-4/beta-7 and L-selectin, regulating both the passage and retention of leukocytes. Both isoform 1 and isoform 2 can adhere to integrin alpha-4/beta-7. Isoform 2, lacking the mucin-like domain, may be specialized in supporting integrin alpha-4/beta-7-dependent adhesion strengthening, independent of L-selectin binding. In Mus musculus (Mouse), this protein is Mucosal addressin cell adhesion molecule 1 (Madcam1).